The primary structure comprises 465 residues: tRNA-2-methylthio-N(6)-dimethylallyladenosine synthase (465 aa).

An MTTase N-terminal domain is found at 5–125 (RKLHIKSFGC…LPELLEKARR (121 aa)). Cysteine 14, cysteine 50, cysteine 88, cysteine 166, cysteine 170, and cysteine 173 together coordinate [4Fe-4S] cluster. The Radical SAM core domain maps to 152–382 (RARGVSAFVT…QLQGLIDSQQ (231 aa)). In terms of domain architecture, TRAM spans 387–449 (RASIGTTVDV…RYSLIGELVK (63 aa)).

It belongs to the methylthiotransferase family. MiaB subfamily. Monomer. [4Fe-4S] cluster is required as a cofactor.

It is found in the cytoplasm. It catalyses the reaction N(6)-dimethylallyladenosine(37) in tRNA + (sulfur carrier)-SH + AH2 + 2 S-adenosyl-L-methionine = 2-methylsulfanyl-N(6)-dimethylallyladenosine(37) in tRNA + (sulfur carrier)-H + 5'-deoxyadenosine + L-methionine + A + S-adenosyl-L-homocysteine + 2 H(+). Catalyzes the methylthiolation of N6-(dimethylallyl)adenosine (i(6)A), leading to the formation of 2-methylthio-N6-(dimethylallyl)adenosine (ms(2)i(6)A) at position 37 in tRNAs that read codons beginning with uridine. The protein is tRNA-2-methylthio-N(6)-dimethylallyladenosine synthase of Rhodopseudomonas palustris (strain BisA53).